Consider the following 155-residue polypeptide: Transcription antitermination protein NusB (155 aa).

This sequence belongs to the NusB family.

Involved in transcription antitermination. Required for transcription of ribosomal RNA (rRNA) genes. Binds specifically to the boxA antiterminator sequence of the ribosomal RNA (rrn) operons. The polypeptide is Transcription antitermination protein NusB (Ralstonia nicotianae (strain ATCC BAA-1114 / GMI1000) (Ralstonia solanacearum)).